Consider the following 186-residue polypeptide: Small ribosomal subunit protein uS7 (186 aa).

This sequence belongs to the universal ribosomal protein uS7 family. Part of the 30S ribosomal subunit.

Functionally, one of the primary rRNA binding proteins, it binds directly to 16S rRNA where it nucleates assembly of the head domain of the 30S subunit. Is located at the subunit interface close to the decoding center. The sequence is that of Small ribosomal subunit protein uS7 from Methanothermobacter thermautotrophicus (strain ATCC 29096 / DSM 1053 / JCM 10044 / NBRC 100330 / Delta H) (Methanobacterium thermoautotrophicum).